The following is a 181-amino-acid chain: Adenine phosphoribosyltransferase (181 aa).

The protein belongs to the purine/pyrimidine phosphoribosyltransferase family. As to quaternary structure, homodimer.

Its subcellular location is the cytoplasm. It catalyses the reaction AMP + diphosphate = 5-phospho-alpha-D-ribose 1-diphosphate + adenine. It participates in purine metabolism; AMP biosynthesis via salvage pathway; AMP from adenine: step 1/1. Catalyzes a salvage reaction resulting in the formation of AMP, that is energically less costly than de novo synthesis. In Rhodopseudomonas palustris (strain ATCC BAA-98 / CGA009), this protein is Adenine phosphoribosyltransferase.